The sequence spans 420 residues: Torsin-4A (420 aa).

The helical transmembrane segment at 130 to 150 threads the bilayer; it reads CLLLFIAIVCFQIFNAIENLD. 202 to 209 is an ATP binding site; that stretch reads GPSGVGKS.

It belongs to the ClpA/ClpB family. Torsin subfamily.

Its subcellular location is the membrane. The polypeptide is Torsin-4A (tor4a) (Xenopus tropicalis (Western clawed frog)).